We begin with the raw amino-acid sequence, 286 residues long: Nucleotide-binding protein PLES_48441 (286 aa).

8 to 15 (GRSGSGKS) is a binding site for ATP. GTP is bound at residue 60-63 (DARN).

Belongs to the RapZ-like family.

In terms of biological role, displays ATPase and GTPase activities. This chain is Nucleotide-binding protein PLES_48441, found in Pseudomonas aeruginosa (strain LESB58).